Here is a 213-residue protein sequence, read N- to C-terminus: Ribosomal RNA small subunit methyltransferase G (213 aa).

S-adenosyl-L-methionine is bound by residues glycine 55, 105-106 (AE), and arginine 124.

The protein belongs to the methyltransferase superfamily. RNA methyltransferase RsmG family.

It is found in the cytoplasm. In terms of biological role, specifically methylates the N7 position of a guanine in 16S rRNA. The protein is Ribosomal RNA small subunit methyltransferase G of Fervidobacterium nodosum (strain ATCC 35602 / DSM 5306 / Rt17-B1).